The sequence spans 318 residues: uncharacterized protein (318 aa).

It to E.coli YfaT and P.aeruginosa PA4490.

This is an uncharacterized protein from Thermotoga maritima (strain ATCC 43589 / DSM 3109 / JCM 10099 / NBRC 100826 / MSB8).